The chain runs to 276 residues: CDP-diacylglycerol--serine O-phosphatidyltransferase (276 aa).

The interval 1–21 (MVESDEDFAPQEFPHTDTDVI) is disordered. A phosphoserine mark is found at S4, S34, S42, S46, S47, and S50. 4 helical membrane passes run 82–102 (MADY…VSCL), 163–183 (IAFA…FFVL), 210–230 (YFEG…AYCV), and 248–268 (QILE…GMIS).

The protein belongs to the CDP-alcohol phosphatidyltransferase class-I family. Requires Mn(2+) as cofactor. Mg(2+) is required as a cofactor.

Its subcellular location is the microsome membrane. It is found in the endoplasmic reticulum membrane. The protein localises to the mitochondrion outer membrane. The enzyme catalyses a CDP-1,2-diacyl-sn-glycerol + L-serine = a 1,2-diacyl-sn-glycero-3-phospho-L-serine + CMP + H(+). It functions in the pathway phospholipid metabolism; phosphatidylethanolamine biosynthesis; phosphatidylethanolamine from CDP-diacylglycerol: step 1/2. Its function is as follows. Catalyzes the synthesis of phosphatidylserine (PtdSer). The polypeptide is CDP-diacylglycerol--serine O-phosphatidyltransferase (CHO1) (Saccharomyces cerevisiae (strain ATCC 204508 / S288c) (Baker's yeast)).